The chain runs to 332 residues: Aspartate carbamoyltransferase catalytic subunit (332 aa).

Residues Arg-54 and Thr-55 each contribute to the carbamoyl phosphate site. Lys-82 is a binding site for L-aspartate. 3 residues coordinate carbamoyl phosphate: Arg-104, His-134, and Gln-137. L-aspartate contacts are provided by Arg-175 and Arg-230. The carbamoyl phosphate site is built by Gly-271 and Pro-272. The disordered stretch occupies residues 312–332 (GGPDGDSTTSPGSGPEGGTTP).

It belongs to the aspartate/ornithine carbamoyltransferase superfamily. ATCase family. As to quaternary structure, heterododecamer (2C3:3R2) of six catalytic PyrB chains organized as two trimers (C3), and six regulatory PyrI chains organized as three dimers (R2).

The enzyme catalyses carbamoyl phosphate + L-aspartate = N-carbamoyl-L-aspartate + phosphate + H(+). It participates in pyrimidine metabolism; UMP biosynthesis via de novo pathway; (S)-dihydroorotate from bicarbonate: step 2/3. Its function is as follows. Catalyzes the condensation of carbamoyl phosphate and aspartate to form carbamoyl aspartate and inorganic phosphate, the committed step in the de novo pyrimidine nucleotide biosynthesis pathway. The protein is Aspartate carbamoyltransferase catalytic subunit of Beutenbergia cavernae (strain ATCC BAA-8 / DSM 12333 / CCUG 43141 / JCM 11478 / NBRC 16432 / NCIMB 13614 / HKI 0122).